The primary structure comprises 1064 residues: WD repeat-containing protein on Y chromosome (1064 aa).

WD repeat units lie at residues 150-194, 317-356, 360-399, 450-489, 502-541, 589-629, 742-781, and 825-864; these read EEVT…IRTA, RIPL…EPSA, GHNG…LLQT, THAA…RKII, IIDI…VVRN, FHTD…RRYS, KTGD…VPAS, and GHLK…LGTL. Residues 1022 to 1044 are disordered; sequence SSLNIKQPTRRRSGKTHDPRNIR.

The sequence is that of WD repeat-containing protein on Y chromosome from Drosophila ananassae (Fruit fly).